A 238-amino-acid chain; its full sequence is Sugar fermentation stimulation protein homolog (238 aa).

The protein belongs to the SfsA family.

The chain is Sugar fermentation stimulation protein homolog from Pseudomonas entomophila (strain L48).